We begin with the raw amino-acid sequence, 311 residues long: Succinate dehydrogenase [ubiquinone] iron-sulfur subunit 2, mitochondrial (311 aa).

A mitochondrion-targeting transit peptide spans 1-63 (MILRRTLPRL…EEIRDHRRGD (63 aa)). The disordered stretch occupies residues 1 to 70 (MILRRTLPRL…RGDAAAASPA (70 aa)). Residues 51–63 (AKEEEIRDHRRGD) show a composition bias toward basic and acidic residues. Positions 77–168 (FRVYRWSPDA…ATTVTPLPHM (92 aa)) constitute a 2Fe-2S ferredoxin-type domain. Residues cysteine 128, cysteine 133, and cysteine 148 each contribute to the [2Fe-2S] cluster site. The 31-residue stretch at 211-241 (ERKRLDGLYECILCACCSAACPSYWWNAEAF) folds into the 4Fe-4S ferredoxin-type domain. Cysteine 221, cysteine 224, and cysteine 227 together coordinate [4Fe-4S] cluster. A [3Fe-4S] cluster-binding site is contributed by cysteine 231. Tryptophan 236 is a binding site for a ubiquinone. Positions 279 and 285 each coordinate [3Fe-4S] cluster. Residue cysteine 289 participates in [4Fe-4S] cluster binding.

Belongs to the succinate dehydrogenase/fumarate reductase iron-sulfur protein family. Component of complex II composed of eight subunits in plants: four classical SDH subunits SDH1, SDH2, SDH3 and SDH4 (a flavoprotein (FP), an iron-sulfur protein (IP), and a cytochrome b composed of a large and a small subunit.), as well as four subunits unknown in mitochondria from bacteria and heterotrophic eukaryotes. [2Fe-2S] cluster is required as a cofactor. Requires [3Fe-4S] cluster as cofactor. The cofactor is [4Fe-4S] cluster.

It is found in the mitochondrion inner membrane. It carries out the reaction a quinone + succinate = fumarate + a quinol. It participates in carbohydrate metabolism; tricarboxylic acid cycle; fumarate from succinate (eukaryal route): step 1/1. Functionally, iron-sulfur protein (IP) subunit of succinate dehydrogenase (SDH) that is involved in complex II of the mitochondrial electron transport chain and is responsible for transferring electrons from succinate to ubiquinone (coenzyme Q). The chain is Succinate dehydrogenase [ubiquinone] iron-sulfur subunit 2, mitochondrial from Oryza sativa subsp. japonica (Rice).